The primary structure comprises 430 residues: Adenylosuccinate synthetase (430 aa).

GTP contacts are provided by residues 12-18 and 40-42; these read GDEGKGK and GHT. Residue Asp-13 is the Proton acceptor of the active site. The Mg(2+) site is built by Asp-13 and Gly-40. IMP-binding positions include 13–16, 38–41, Thr-128, Arg-142, Gln-223, Thr-238, and Arg-302; these read DEGK and NAGH. His-41 (proton donor) is an active-site residue. 298–304 contacts substrate; that stretch reads TTTGRPR. Residues Arg-304, 330–332, and 412–414 contribute to the GTP site; these read SID and SVG.

The protein belongs to the adenylosuccinate synthetase family. Homodimer. It depends on Mg(2+) as a cofactor.

It localises to the cytoplasm. The catalysed reaction is IMP + L-aspartate + GTP = N(6)-(1,2-dicarboxyethyl)-AMP + GDP + phosphate + 2 H(+). It functions in the pathway purine metabolism; AMP biosynthesis via de novo pathway; AMP from IMP: step 1/2. Plays an important role in the de novo pathway of purine nucleotide biosynthesis. Catalyzes the first committed step in the biosynthesis of AMP from IMP. This Streptococcus pyogenes serotype M12 (strain MGAS9429) protein is Adenylosuccinate synthetase.